Consider the following 336-residue polypeptide: Dihydroorotate dehydrogenase (quinone) (336 aa).

FMN-binding positions include 62-66 (AGLDK) and Thr86. Lys66 lines the substrate pocket. Position 111–115 (111–115 (NRMGF)) interacts with substrate. Residues Asn139 and Asn172 each contribute to the FMN site. Asn172 lines the substrate pocket. The Nucleophile role is filled by Ser175. Substrate is bound at residue Asn177. Residues Lys217 and Thr245 each contribute to the FMN site. 246–247 (NT) provides a ligand contact to substrate. Residues Gly268, Gly297, and 318-319 (YS) each bind FMN.

This sequence belongs to the dihydroorotate dehydrogenase family. Type 2 subfamily. As to quaternary structure, monomer. The cofactor is FMN.

The protein localises to the cell membrane. The catalysed reaction is (S)-dihydroorotate + a quinone = orotate + a quinol. Its pathway is pyrimidine metabolism; UMP biosynthesis via de novo pathway; orotate from (S)-dihydroorotate (quinone route): step 1/1. Catalyzes the conversion of dihydroorotate to orotate with quinone as electron acceptor. The protein is Dihydroorotate dehydrogenase (quinone) of Aeromonas salmonicida (strain A449).